The sequence spans 105 residues: U2-lycotoxin-Ls1a (105 aa).

The signal sequence occupies residues 1-17 (MIKYVLISALLVVAVYS). Residues 18-41 (FTIEDNEDALLEEAEDELDTEEER) constitute a propeptide that is removed on maturation. 4 cysteine pairs are disulfide-bonded: cysteine 51/cysteine 67, cysteine 58/cysteine 97, cysteine 60/cysteine 83, and cysteine 69/cysteine 81.

The protein belongs to the neurotoxin 04 (omega-agtx) family. 01 (type I omega-agtx) subfamily. In terms of tissue distribution, expressed by the venom gland.

The protein localises to the secreted. Its function is as follows. Insecticidal to house crickets. It induces an excitatory slow-onset impact that leads to irreversible spastic paralysis. It also modifies human voltage-gated potassium channel Kv1.5/KCNA5. Most likely, it binds to the voltage-sensing domain of the channel, suggesting it does not block the pore but prevents its opening at physiological membrane potentials. The recombinant peptide binds to the channel in an irreversible manner and slows down the hKv1.5 current activation kinetics. It is not toxic to mice, when intracranially injected (at 0.5 ug/g mouse). The polypeptide is U2-lycotoxin-Ls1a (Lycosa singoriensis (Wolf spider)).